The following is a 354-amino-acid chain: Trans-L-3-hydroxyproline dehydratase (354 aa).

The Proton acceptor role is filled by C104. Substrate-binding positions include 105–106 (GH), D269, and 274–275 (GS).

The protein belongs to the proline racemase family. As to quaternary structure, homodimer.

It catalyses the reaction trans-3-hydroxy-L-proline = 1-pyrroline-2-carboxylate + H2O. Catalyzes the dehydration of trans-3-hydroxy-L-proline to delta-1-pyrroline-2-carboxylate (Pyr2C). This is Trans-L-3-hydroxyproline dehydratase (L3hypdh) from Mus musculus (Mouse).